A 163-amino-acid polypeptide reads, in one-letter code: MSKTRVIYPGTFDPITNGHVDLVTRASRMFDEVVVAIAIGHHKKPLFSLEERVKLAQLSLSHLHNVEFVGFDGLLVNFFREQNATAVLRGLRAVSDFEYEFQLANMNRQLDHHFEAVFLTPSEQYSFISSTLVREIARLRGDVAKFVPQAVVEAFEYKHQQGW.

Residue Thr11 participates in substrate binding. ATP is bound by residues 11–12 (TF) and His19. Residues Lys43, Leu75, and Arg89 each coordinate substrate. ATP contacts are provided by residues 90–92 (GLR), Glu100, and 125–131 (YSFISST).

Belongs to the bacterial CoaD family. In terms of assembly, homohexamer. Requires Mg(2+) as cofactor.

The protein resides in the cytoplasm. It catalyses the reaction (R)-4'-phosphopantetheine + ATP + H(+) = 3'-dephospho-CoA + diphosphate. Its pathway is cofactor biosynthesis; coenzyme A biosynthesis; CoA from (R)-pantothenate: step 4/5. In terms of biological role, reversibly transfers an adenylyl group from ATP to 4'-phosphopantetheine, yielding dephospho-CoA (dPCoA) and pyrophosphate. This Acinetobacter baylyi (strain ATCC 33305 / BD413 / ADP1) protein is Phosphopantetheine adenylyltransferase.